Consider the following 273-residue polypeptide: Light-independent protochlorophyllide reductase iron-sulfur ATP-binding protein (273 aa).

ATP is bound by residues 12-17 (GIGKST) and Lys41. Ser16 is a binding site for Mg(2+). Cys97 and Cys131 together coordinate [4Fe-4S] cluster. ATP is bound at residue 182-183 (NR).

The protein belongs to the NifH/BchL/ChlL family. In terms of assembly, homodimer. Protochlorophyllide reductase is composed of three subunits; BchL, BchN and BchB. It depends on [4Fe-4S] cluster as a cofactor.

It catalyses the reaction chlorophyllide a + oxidized 2[4Fe-4S]-[ferredoxin] + 2 ADP + 2 phosphate = protochlorophyllide a + reduced 2[4Fe-4S]-[ferredoxin] + 2 ATP + 2 H2O. It participates in porphyrin-containing compound metabolism; bacteriochlorophyll biosynthesis (light-independent). Component of the dark-operative protochlorophyllide reductase (DPOR) that uses Mg-ATP and reduced ferredoxin to reduce ring D of protochlorophyllide (Pchlide) to form chlorophyllide a (Chlide). This reaction is light-independent. The L component serves as a unique electron donor to the NB-component of the complex, and binds Mg-ATP. The protein is Light-independent protochlorophyllide reductase iron-sulfur ATP-binding protein of Roseiflexus castenholzii (strain DSM 13941 / HLO8).